A 266-amino-acid chain; its full sequence is Endoplasmic reticulum vesicle protein 25 (266 aa).

An N-terminal signal peptide occupies residues 1–26 (MGSSPQSSTRTLLGLLFLLLVQLSSA). Residues 27 to 188 (LKFDLHASSG…TNESTNERVK (162 aa)) lie on the Lumenal side of the membrane. The region spanning 39–129 (ERCIRNFVFK…YKSVELDVEI (91 aa)) is the GOLD domain. Residues 189–209 (WFAFGTMGMLVGLGVWQVVYL) form a helical membrane-spanning segment. The Cytoplasmic portion of the chain corresponds to 210–266 (RAYFRYVDFPVSWRVDGVVANCCSCCEQVEASYLRSSRVVFWSPLVMWTRLSWLILR).

The protein belongs to the EMP24/GP25L family.

The protein localises to the endoplasmic reticulum membrane. Its subcellular location is the golgi apparatus membrane. Constituent of COPII-coated endoplasmic reticulum-derived transport vesicles. Required for efficient transport of a subset of secretory proteins to the Golgi. Facilitates retrograde transport from the Golgi to the endoplasmic reticulum. The protein is Endoplasmic reticulum vesicle protein 25 (erv25) of Aspergillus fumigatus (strain ATCC MYA-4609 / CBS 101355 / FGSC A1100 / Af293) (Neosartorya fumigata).